A 520-amino-acid polypeptide reads, in one-letter code: GMP synthase [glutamine-hydrolyzing] (520 aa).

The Glutamine amidotransferase type-1 domain maps to 9 to 202 (KILILDFGSQ…VRQICGCTGQ (194 aa)). The active-site Nucleophile is Cys86. Residues His176 and Glu178 contribute to the active site. Residues 203 to 395 (WTPGQIIEDA…LGLPHPMVYR (193 aa)) form the GMPS ATP-PPase domain. Position 230 to 236 (230 to 236 (SGGVDSS)) interacts with ATP.

As to quaternary structure, homodimer.

The enzyme catalyses XMP + L-glutamine + ATP + H2O = GMP + L-glutamate + AMP + diphosphate + 2 H(+). Its pathway is purine metabolism; GMP biosynthesis; GMP from XMP (L-Gln route): step 1/1. Its function is as follows. Catalyzes the synthesis of GMP from XMP. The chain is GMP synthase [glutamine-hydrolyzing] from Syntrophotalea carbinolica (strain DSM 2380 / NBRC 103641 / GraBd1) (Pelobacter carbinolicus).